A 121-amino-acid polypeptide reads, in one-letter code: MSITKDQIIEAVASMSVMEVVELITAMEEKFGVSAAAVAAGPAAAAEAVEEQTEFNVMLTAIGANKVAVIKAVRAATSLGLKEAKDLVEAAPTAVKEAVSKDEAEALKKELEAAGASVEIK.

This sequence belongs to the bacterial ribosomal protein bL12 family. Homodimer. Part of the ribosomal stalk of the 50S ribosomal subunit. Forms a multimeric L10(L12)X complex, where L10 forms an elongated spine to which 2 to 4 L12 dimers bind in a sequential fashion. Binds GTP-bound translation factors.

Forms part of the ribosomal stalk which helps the ribosome interact with GTP-bound translation factors. Is thus essential for accurate translation. This Tolumonas auensis (strain DSM 9187 / NBRC 110442 / TA 4) protein is Large ribosomal subunit protein bL12.